The primary structure comprises 330 residues: Phosphate acyltransferase (330 aa).

This sequence belongs to the PlsX family. In terms of assembly, homodimer. Probably interacts with PlsY.

It localises to the cytoplasm. The catalysed reaction is a fatty acyl-[ACP] + phosphate = an acyl phosphate + holo-[ACP]. It functions in the pathway lipid metabolism; phospholipid metabolism. In terms of biological role, catalyzes the reversible formation of acyl-phosphate (acyl-PO(4)) from acyl-[acyl-carrier-protein] (acyl-ACP). This enzyme utilizes acyl-ACP as fatty acyl donor, but not acyl-CoA. In Bacillus cytotoxicus (strain DSM 22905 / CIP 110041 / 391-98 / NVH 391-98), this protein is Phosphate acyltransferase.